Reading from the N-terminus, the 204-residue chain is MEEGKGTEKKGCIITVIIVCIVLTVGLDIVAGFVGLQAQAAQQYVKHDKLECKAPSKTAFVLGIIAVSCLATAHVSANVIGCSISNLFQALGALPKNKITTYFNMACLFLIWVVGIFGALILANGIWSNTESRIRCRFTNNHVFSIGGKVCFLHAIVSGIYYISSIVARARHFHRTKPNKTKPSELKPIPTEPNEAEPNSTPNP.

A run of 4 helical transmembrane segments spans residues 13–33 (IITVIIVCIVLTVGLDIVAGF), 60–80 (FVLGIIAVSCLATAHVSANVI), 107–127 (CLFLIWVVGIFGALILANGIW), and 143–163 (VFSIGGKVCFLHAIVSGIYYI). The disordered stretch occupies residues 177–204 (KPNKTKPSELKPIPTEPNEAEPNSTPNP). N-linked (GlcNAc...) asparagine glycosylation occurs at asparagine 179.

Belongs to the DESIGUAL family. In terms of tissue distribution, only expressed in inflorescences.

The protein resides in the endoplasmic reticulum membrane. The sequence is that of Protein DESIGUAL 4 from Arabidopsis thaliana (Mouse-ear cress).